A 205-amino-acid chain; its full sequence is Ribosomal RNA small subunit methyltransferase J (205 aa).

S-adenosyl-L-methionine is bound by residues 56-57 (RD), 72-73 (ER), and aspartate 124.

The protein belongs to the methyltransferase superfamily. RsmJ family.

It localises to the cytoplasm. The enzyme catalyses guanosine(1516) in 16S rRNA + S-adenosyl-L-methionine = N(2)-methylguanosine(1516) in 16S rRNA + S-adenosyl-L-homocysteine + H(+). Specifically methylates the guanosine in position 1516 of 16S rRNA. The chain is Ribosomal RNA small subunit methyltransferase J from Brucella anthropi (strain ATCC 49188 / DSM 6882 / CCUG 24695 / JCM 21032 / LMG 3331 / NBRC 15819 / NCTC 12168 / Alc 37) (Ochrobactrum anthropi).